Reading from the N-terminus, the 1085-residue chain is DNA-directed RNA polymerase subunit beta (1085 aa).

Belongs to the RNA polymerase beta chain family. In terms of assembly, in plastids the minimal PEP RNA polymerase catalytic core is composed of four subunits: alpha, beta, beta', and beta''. When a (nuclear-encoded) sigma factor is associated with the core the holoenzyme is formed, which can initiate transcription.

It localises to the plastid. The protein localises to the chloroplast. It carries out the reaction RNA(n) + a ribonucleoside 5'-triphosphate = RNA(n+1) + diphosphate. DNA-dependent RNA polymerase catalyzes the transcription of DNA into RNA using the four ribonucleoside triphosphates as substrates. The chain is DNA-directed RNA polymerase subunit beta from Physcomitrium patens (Spreading-leaved earth moss).